A 126-amino-acid chain; its full sequence is UPF0538 protein C2orf76 homolog (126 aa).

The protein belongs to the UPF0538 family.

This Bos taurus (Bovine) protein is UPF0538 protein C2orf76 homolog.